The primary structure comprises 890 residues: MLLNMNLQELKQKYNYDVATKMMQQYLDIKFAHLDCLLLFRMGDFYEMFYEDAILASNVLGIALTKRGKNGEEEIAMCGVPYHALENYLTKLIEENYKVAICDQLETPEEAKNRGGYKAVVTRDVTRIITPGTIIEENLIASAEPNYLASLVIPKNKETASLCYVDLSTSEIVVVNVPETEILNELARLKPREILLSENLRSSNLADSIFKQLNFRITYQVDSFFAINKCKKIILDFYKMKDIKGIGEISSSQICAIGSVLEYLSLTQKQNIPHLPIPRIINFHSYMTIDFSTRRNLEIVTNSQGDSQGSLLSTLNHTVTKQGGRLLYNFLSSPLTNIAKINHRLNITEFFYSNLEIVKKIRELLKKTSDIERCLTRITMNRSSGRDLLSIKYTLETATIIKEVFFDAYGFNLPDFIEKIIKPLSGDAELYNLIDETIREDAPNNLNDGGIIKHEYHPKVAQLHDLINNGKLYIEKLKDQYRKETGIDSLKISHNNVIGLFIDITAKNVNKILDPKFIHRQTTVNHVRYTTAELQKLESELVNAKTLVISLEKELYADICSQVIEKASYLRMLASSLSGLDVFCNFAYIADEYDYVKPEFTDDLSFDIVKGRHPVVEKALQRESKSFVYNDCHLSELERIWLITGPNMAGKSTFLRQNAIIAIIAQIGSFVPAKSAKIGVVDKIFSRIGAADDLIKGQSTFMAEMLETSAILAQSTKNSLIILDEVGRGTSTYDGVSIAWSVLEYIHDKLKCRCLFATHYHELTVMSNFLPALQNYTIAIEESGKDILFLHNIISGAADRSYGLHVAALAGLPESVINRAEQILLKFEKTSTGKGKNILSTESNNLSLFYLEPNKTTISSKLDKKFSTIDPDKLSPKEALELIYELKKLV.

645–652 lines the ATP pocket; the sequence is GPNMAGKS.

Belongs to the DNA mismatch repair MutS family.

Its function is as follows. This protein is involved in the repair of mismatches in DNA. It is possible that it carries out the mismatch recognition step. This protein has a weak ATPase activity. The sequence is that of DNA mismatch repair protein MutS from Rickettsia rickettsii (strain Iowa).